Consider the following 444-residue polypeptide: Exodeoxyribonuclease 7 large subunit (444 aa).

The protein belongs to the XseA family. As to quaternary structure, heterooligomer composed of large and small subunits.

The protein localises to the cytoplasm. The catalysed reaction is Exonucleolytic cleavage in either 5'- to 3'- or 3'- to 5'-direction to yield nucleoside 5'-phosphates.. In terms of biological role, bidirectionally degrades single-stranded DNA into large acid-insoluble oligonucleotides, which are then degraded further into small acid-soluble oligonucleotides. The polypeptide is Exodeoxyribonuclease 7 large subunit (Pseudoalteromonas translucida (strain TAC 125)).